An 89-amino-acid polypeptide reads, in one-letter code: Small ribosomal subunit protein uS15 (89 aa).

This sequence belongs to the universal ribosomal protein uS15 family. Part of the 30S ribosomal subunit. Forms a bridge to the 50S subunit in the 70S ribosome, contacting the 23S rRNA.

One of the primary rRNA binding proteins, it binds directly to 16S rRNA where it helps nucleate assembly of the platform of the 30S subunit by binding and bridging several RNA helices of the 16S rRNA. Functionally, forms an intersubunit bridge (bridge B4) with the 23S rRNA of the 50S subunit in the ribosome. The sequence is that of Small ribosomal subunit protein uS15 from Pseudomonas putida (strain GB-1).